A 421-amino-acid polypeptide reads, in one-letter code: Acetylglutamate kinase (421 aa).

The segment at 1–252 (MASTKEISQY…PLESSVSITR (252 aa)) is acetylglutamate kinase. Substrate-binding positions include 59-60 (AG), arginine 81, and asparagine 170. Positions 274–420 (ERVIRATTWK…HCAQHPPTLI (147 aa)) constitute an N-acetyltransferase domain.

This sequence in the N-terminal section; belongs to the acetylglutamate kinase family. ArgB subfamily.

It is found in the cytoplasm. The catalysed reaction is N-acetyl-L-glutamate + ATP = N-acetyl-L-glutamyl 5-phosphate + ADP. It functions in the pathway amino-acid biosynthesis; L-arginine biosynthesis; N(2)-acetyl-L-ornithine from L-glutamate: step 2/4. This chain is Acetylglutamate kinase (argB), found in Xylella fastidiosa (strain 9a5c).